Reading from the N-terminus, the 395-residue chain is MSIVLAYSGGLDTSVAVHWLKERYQTEVIAYCANLGQIEDLEAVSKRATAAGASEVIVEDVRDLFLHDYAIPALAAGAAYEGKYLLAAPLSRPLIAERLVSIARERGASAVAHGATGKGNDQVRFYTSVRALAPELDILAPVIDWEMTSRGSEIAYADRHGIDVGVSKTTPYSIDTNIWGTSIECGDLDLIDHAPPPDAWQITTAPVQAPDRPTTITIEFEAGIPVALDGRKLDLIDLVSELGDTAAANGIGRTEILESRIVGFKSRGIYEAPAATVLLAARTDLEALVLDRETLHHKRSIADQYAELVYYGYWFTDLRAALDAYCARLAHRVTGTVTVELYKGSARCIGRTSPKYGRYSSALADYEEADTFLHEAGAGFAYCWALPLTEGVVTR.

ATP contacts are provided by residues 6 to 14 and A33; that span reads AYSGGLDTS. Y84 lines the L-citrulline pocket. ATP is bound at residue G114. Residues T116, N120, and D121 each contribute to the L-aspartate site. Position 120 (N120) interacts with L-citrulline. Residues R124, S173, S182, E258, and Y270 each coordinate L-citrulline.

It belongs to the argininosuccinate synthase family. Type 1 subfamily. In terms of assembly, homotetramer.

The protein localises to the cytoplasm. The catalysed reaction is L-citrulline + L-aspartate + ATP = 2-(N(omega)-L-arginino)succinate + AMP + diphosphate + H(+). It functions in the pathway amino-acid biosynthesis; L-arginine biosynthesis; L-arginine from L-ornithine and carbamoyl phosphate: step 2/3. This is Argininosuccinate synthase from Rhodococcoides fascians (Rhodococcus fascians).